The following is a 167-amino-acid chain: MPAFLNPAEAEFWVGAGLLIFLGIVFFGAKAHKAIAAALDAKAASIQANLDEAARIRDEARRLLEGLQAERAEAERQAKEMLATAEVQVRQFEAEAKAKLEEAIERRRRMAEQKIATAEAQAAAEVKAAAAELAAQMAESVLAQRLTGAKADPLVDRAIGQLASKLQ.

Residues 8–28 (AEAEFWVGAGLLIFLGIVFFG) traverse the membrane as a helical segment.

This sequence belongs to the ATPase B chain family. In terms of assembly, F-type ATPases have 2 components, F(1) - the catalytic core - and F(0) - the membrane proton channel. F(1) has five subunits: alpha(3), beta(3), gamma(1), delta(1), epsilon(1). F(0) has three main subunits: a(1), b(2) and c(10-14). The alpha and beta chains form an alternating ring which encloses part of the gamma chain. F(1) is attached to F(0) by a central stalk formed by the gamma and epsilon chains, while a peripheral stalk is formed by the delta and b chains.

It is found in the cell inner membrane. Its function is as follows. F(1)F(0) ATP synthase produces ATP from ADP in the presence of a proton or sodium gradient. F-type ATPases consist of two structural domains, F(1) containing the extramembraneous catalytic core and F(0) containing the membrane proton channel, linked together by a central stalk and a peripheral stalk. During catalysis, ATP synthesis in the catalytic domain of F(1) is coupled via a rotary mechanism of the central stalk subunits to proton translocation. Functionally, component of the F(0) channel, it forms part of the peripheral stalk, linking F(1) to F(0). In Phenylobacterium zucineum (strain HLK1), this protein is ATP synthase subunit b.